Reading from the N-terminus, the 159-residue chain is 2-C-methyl-D-erythritol 2,4-cyclodiphosphate synthase (159 aa).

Asp10 and His12 together coordinate a divalent metal cation. 4-CDP-2-C-methyl-D-erythritol 2-phosphate-binding positions include 10-12 (DVH) and 37-38 (HS). His45 contributes to the a divalent metal cation binding site. 4-CDP-2-C-methyl-D-erythritol 2-phosphate is bound by residues 59–61 (DIG), 64–68 (FPDTD), 103–109 (AQAPKML), 135–138 (TTTE), Phe142, and Arg145.

The protein belongs to the IspF family. In terms of assembly, homotrimer. Requires a divalent metal cation as cofactor.

It carries out the reaction 4-CDP-2-C-methyl-D-erythritol 2-phosphate = 2-C-methyl-D-erythritol 2,4-cyclic diphosphate + CMP. It functions in the pathway isoprenoid biosynthesis; isopentenyl diphosphate biosynthesis via DXP pathway; isopentenyl diphosphate from 1-deoxy-D-xylulose 5-phosphate: step 4/6. Its function is as follows. Involved in the biosynthesis of isopentenyl diphosphate (IPP) and dimethylallyl diphosphate (DMAPP), two major building blocks of isoprenoid compounds. Catalyzes the conversion of 4-diphosphocytidyl-2-C-methyl-D-erythritol 2-phosphate (CDP-ME2P) to 2-C-methyl-D-erythritol 2,4-cyclodiphosphate (ME-CPP) with a corresponding release of cytidine 5-monophosphate (CMP). In Francisella philomiragia subsp. philomiragia (strain ATCC 25017 / CCUG 19701 / FSC 153 / O#319-036), this protein is 2-C-methyl-D-erythritol 2,4-cyclodiphosphate synthase.